The sequence spans 418 residues: Voltage-gated ClC-type chloride channel ClcB (418 aa).

Residues M1–R4 are Cytoplasmic-facing. A helical transmembrane segment spans residues L5–A25. Over M26 to R53 the chain is Periplasmic. The helical transmembrane segment at L54–F74 threads the bilayer. The Cytoplasmic segment spans residues T75–K145. Residues L146–G166 form a helical membrane-spanning segment. The Periplasmic segment spans residues S167–T177. A helical membrane pass occupies residues M178 to I200. Topologically, residues N201–Y221 are cytoplasmic. The helical transmembrane segment at A222–M242 threads the bilayer. The Periplasmic portion of the chain corresponds to N243–P257. Residues W258 to W278 form a helical membrane-spanning segment. At G279 to T290 the chain is on the cytoplasmic side. A helical membrane pass occupies residues A291 to A311. At S312–S315 the chain is on the periplasmic side. Residues G316–Y336 traverse the membrane as a helical segment. At G337–T351 the chain is on the cytoplasmic side. The helical transmembrane segment at L352 to M372 threads the bilayer. Residues S373–E379 lie on the Periplasmic side of the membrane. The helical transmembrane segment at M380 to I400 threads the bilayer. Topologically, residues S401 to S418 are cytoplasmic.

It belongs to the chloride channel (TC 2.A.49) family. ClcB subfamily.

The protein resides in the cell inner membrane. In terms of biological role, probably acts as an electrical shunt for an outwardly-directed proton pump that is linked to amino acid decarboxylation, as part of the extreme acid resistance (XAR) response. This Escherichia coli O6:H1 (strain CFT073 / ATCC 700928 / UPEC) protein is Voltage-gated ClC-type chloride channel ClcB (clcB).